The chain runs to 138 residues: Basic phospholipase A2 homolog acutohaemolysin (138 aa).

A signal peptide spans M1–G16. 7 disulfide bridges follow: C42–C131, C44–C60, C59–C111, C65–C138, C66–C104, C73–C97, and C91–C102. The segment at K121 to K133 is important for membrane-damaging activities in eukaryotes and bacteria; heparin-binding.

In terms of assembly, monomer. As to expression, expressed by the venom gland.

It is found in the secreted. Functionally, snake venom phospholipase A2 homolog that lacks enzymatic activity. Is myotoxic. Has a strong indirect hemolytic activity and anticoagulant activity. A model of myotoxic mechanism has been proposed: an apo Lys49-PLA2 is activated by the entrance of a hydrophobic molecule (e.g. fatty acid) at the hydrophobic channel of the protein leading to a reorientation of a monomer. This reorientation causes a transition between 'inactive' to 'active' states, causing alignment of C-terminal and membrane-docking sites (MDoS) side-by-side and putting the membrane-disruption sites (MDiS) in the same plane, exposed to solvent and in a symmetric position for both monomers. The MDoS region stabilizes the toxin on membrane by the interaction of charged residues with phospholipid head groups. Subsequently, the MDiS region destabilizes the membrane with penetration of hydrophobic residues. This insertion causes a disorganization of the membrane, allowing an uncontrolled influx of ions (i.e. calcium and sodium), and eventually triggering irreversible intracellular alterations and cell death. The sequence is that of Basic phospholipase A2 homolog acutohaemolysin from Deinagkistrodon acutus (Hundred-pace snake).